Here is a 309-residue protein sequence, read N- to C-terminus: Putative S-adenosyl-L-methionine-dependent methyltransferase Mvan_0104 (309 aa).

S-adenosyl-L-methionine is bound by residues Asp134 and 163 to 164 (DL).

The protein belongs to the UPF0677 family.

Exhibits S-adenosyl-L-methionine-dependent methyltransferase activity. The sequence is that of Putative S-adenosyl-L-methionine-dependent methyltransferase Mvan_0104 from Mycolicibacterium vanbaalenii (strain DSM 7251 / JCM 13017 / BCRC 16820 / KCTC 9966 / NRRL B-24157 / PYR-1) (Mycobacterium vanbaalenii).